Consider the following 300-residue polypeptide: Ornithine carbamoyltransferase (300 aa).

Residues 49–52 (STRT), Gln76, Arg100, and 127–130 (HPCQ) each bind carbamoyl phosphate. L-ornithine contacts are provided by residues Asn158, Asp218, and 222–223 (SM). Residues 258 to 259 (CL) and Arg286 contribute to the carbamoyl phosphate site.

It belongs to the aspartate/ornithine carbamoyltransferase superfamily. OTCase family.

The protein localises to the cytoplasm. The catalysed reaction is carbamoyl phosphate + L-ornithine = L-citrulline + phosphate + H(+). The protein operates within amino-acid biosynthesis; L-arginine biosynthesis; L-arginine from L-ornithine and carbamoyl phosphate: step 1/3. Functionally, reversibly catalyzes the transfer of the carbamoyl group from carbamoyl phosphate (CP) to the N(epsilon) atom of ornithine (ORN) to produce L-citrulline. This Nitratidesulfovibrio vulgaris (strain ATCC 29579 / DSM 644 / CCUG 34227 / NCIMB 8303 / VKM B-1760 / Hildenborough) (Desulfovibrio vulgaris) protein is Ornithine carbamoyltransferase.